The sequence spans 343 residues: Aldehyde reductase 2 (343 aa).

Tyr-177 contributes to the NADP(+) binding site.

Belongs to the NAD(P)-dependent epimerase/dehydratase family. Dihydroflavonol-4-reductase subfamily. Monomer.

It carries out the reaction a primary alcohol + NADP(+) = an aldehyde + NADPH + H(+). Its activity is regulated as follows. Inhibited by quercetin and diphenylhydantoin. In terms of biological role, catalyzes the asymmetric reduction of o-substituted aliphatic and aromatic aldehydes and ketones to an S-enantiomer. Reduces ethyl 4-chloro-3-oxobutanoate to ethyl (S)-4-chloro-3-hydroxybutanoate. This Sporidiobolus salmonicolor (Yeast-like fungus) protein is Aldehyde reductase 2.